Reading from the N-terminus, the 551-residue chain is Probable alpha-glucosidase (551 aa).

The active-site Nucleophile is D212. Residue E272 is the Proton donor of the active site.

Belongs to the glycosyl hydrolase 13 family.

The enzyme catalyses Hydrolysis of terminal, non-reducing (1-&gt;4)-linked alpha-D-glucose residues with release of alpha-D-glucose.. The protein is Probable alpha-glucosidase (aglA) of Rhizobium meliloti (strain 1021) (Ensifer meliloti).